A 296-amino-acid chain; its full sequence is GTPase Era (296 aa).

In terms of domain architecture, Era-type G spans Lys-7–Glu-174. Residues Gly-15 to Ser-22 are G1. Gly-15–Ser-22 serves as a coordination point for GTP. The interval Gln-41–His-45 is G2. The tract at residues Asp-62–Gly-65 is G3. GTP-binding positions include Asp-62 to Phe-66 and Asn-123 to Asp-126. Residues Asn-123–Asp-126 are G4. The interval Val-153–Ala-155 is G5. A KH type-2 domain is found at Ile-205–Ser-281.

This sequence belongs to the TRAFAC class TrmE-Era-EngA-EngB-Septin-like GTPase superfamily. Era GTPase family. As to quaternary structure, monomer.

It localises to the cytoplasm. The protein localises to the cell inner membrane. Functionally, an essential GTPase that binds both GDP and GTP, with rapid nucleotide exchange. Plays a role in 16S rRNA processing and 30S ribosomal subunit biogenesis and possibly also in cell cycle regulation and energy metabolism. The polypeptide is GTPase Era (Nitrosomonas eutropha (strain DSM 101675 / C91 / Nm57)).